Consider the following 399-residue polypeptide: Acetate kinase (399 aa).

Position 7 (Asn7) interacts with Mg(2+). Lys14 contacts ATP. Substrate is bound at residue Arg91. Asp148 (proton donor/acceptor) is an active-site residue. ATP is bound by residues 208–212 (HLGNG) and 283–285 (DFR). Glu384 provides a ligand contact to Mg(2+).

The protein belongs to the acetokinase family. As to quaternary structure, homodimer. Mg(2+) is required as a cofactor. Mn(2+) serves as cofactor.

It is found in the cytoplasm. It catalyses the reaction acetate + ATP = acetyl phosphate + ADP. The protein operates within metabolic intermediate biosynthesis; acetyl-CoA biosynthesis; acetyl-CoA from acetate: step 1/2. Its function is as follows. Catalyzes the formation of acetyl phosphate from acetate and ATP. Can also catalyze the reverse reaction. The chain is Acetate kinase from Dictyoglomus thermophilum (strain ATCC 35947 / DSM 3960 / H-6-12).